The primary structure comprises 653 residues: Translation factor GUF1, mitochondrial (653 aa).

Positions 56–236 (ENYRNFSIVA…SIIKNIPAPN (181 aa)) constitute a tr-type G domain. Residues 65 to 72 (AHVDHGKS), 129 to 133 (DTPGH), and 183 to 186 (NKID) each bind GTP.

This sequence belongs to the TRAFAC class translation factor GTPase superfamily. Classic translation factor GTPase family. LepA subfamily.

Its subcellular location is the mitochondrion inner membrane. It carries out the reaction GTP + H2O = GDP + phosphate + H(+). Functionally, promotes mitochondrial protein synthesis. May act as a fidelity factor of the translation reaction, by catalyzing a one-codon backward translocation of tRNAs on improperly translocated ribosomes. Binds to mitochondrial ribosomes in a GTP-dependent manner. This Candida tropicalis (strain ATCC MYA-3404 / T1) (Yeast) protein is Translation factor GUF1, mitochondrial.